Reading from the N-terminus, the 467-residue chain is ESX-4 secretion system protein eccD4 (467 aa).

11 helical membrane-spanning segments follow: residues 122-142, 152-172, 186-206, 209-229, 241-261, 264-284, 319-339, 344-364, 374-394, 401-421, and 439-459; these read GALA…RNAL, ATAG…VIAC, VIAT…VPGV, VLVA…ITGC, AVVV…VPAI, LATL…VLLA, LTSL…GTAV, IHRS…LLLL, SLVF…VAAD, PWIA…GFVA, and CLAL…YSAV.

This sequence belongs to the EccD/Snm4 family. In terms of assembly, part of the ESX-4 / type VII secretion system (T7SS), which is composed of cytosolic and membrane components.

The protein localises to the cell membrane. In Mycobacterium tuberculosis (strain CDC 1551 / Oshkosh), this protein is ESX-4 secretion system protein eccD4 (eccD4).